A 564-amino-acid polypeptide reads, in one-letter code: Bicarbonate transporter BicA (564 aa).

Topologically, residues 1 to 11 are cytoplasmic; the sequence is MQITNKIHFRN. Residues 12–37 traverse the membrane as a helical segment; it reads LQGDLFGGVTAAVIALPMALAFGIAS. Residues 38-40 lie on the Periplasmic side of the membrane; it reads GAG. Residues 41–58 traverse the membrane as a helical segment; that stretch reads ATAGLWGAVIVGFFAALF. Residues 59 to 70 lie on the Cytoplasmic side of the membrane; that stretch reads GGTPTLISEPTG. Residue threonine 69 participates in hydrogencarbonate binding. Residues 71–86 traverse the membrane as a helical segment; the sequence is PMTVVQTAVIASLVAA. The Periplasmic segment spans residues 87–90; the sequence is DPDN. Residues 91-112 form a helical membrane-spanning segment; sequence GLAMAFTVVMMAGLFQIAFGLL. At 113–122 the chain is on the cytoplasmic side; that stretch reads KLGKYVTMMP. The chain crosses the membrane as a helical span at residues 123 to 145; it reads YTVISGFMSGIGIILVILQLAPF. Topologically, residues 146 to 170 are periplasmic; it reads LGQASPKGGVIGTLQALPNLVSNVR. Residues 171–185 form a helical membrane-spanning segment; the sequence is PVETLLALMTVGIIW. At 186–196 the chain is on the cytoplasmic side; the sequence is FMPSRWKKFAP. Residues 197 to 211 form a helical membrane-spanning segment; that stretch reads PQLVALVLGTIISIT. Residues 212 to 240 are Periplasmic-facing; it reads LFGDLDIRRIGEIQAGLPALQLPVFQADQ. The helical transmembrane segment at 241 to 269 threads the bilayer; sequence LQRMLIDAAVLGMLGCIDALLTSVVADSL. Residues aspartate 258 and threonine 262 each coordinate Na(+). At 270 to 275 the chain is on the cytoplasmic side; the sequence is TRTEHN. The helical transmembrane segment at 276-292 threads the bilayer; sequence SNKELVGQGIGNVMSGL. Residues 293–302 lie on the Periplasmic side of the membrane; that stretch reads FGGLGGAGAT. Glycine 300 serves as a coordination point for Na(+). Alanine 301 lines the hydrogencarbonate pocket. Residue threonine 302 coordinates Na(+). Residues 303-312 traverse the membrane as a helical segment; that stretch reads MGTVVNIQSG. The Cytoplasmic segment spans residues 313–315; sequence GRT. Residues 316-338 form a helical membrane-spanning segment; the sequence is ALSGLIRAMVLLVVILGAAKLAA. Topologically, residues 339–341 are periplasmic; that stretch reads TIP. A helical membrane pass occupies residues 342-357; the sequence is LAVLAGIAFKVGVDII. Residues 358-369 lie on the Cytoplasmic side of the membrane; the sequence is DWGFLKRAHHVS. Residues 370-390 traverse the membrane as a helical segment; the sequence is IKGALIMYAVIVLTVLVDLIA. Residues 391–392 lie on the Periplasmic side of the membrane; the sequence is AV. Residues 393–405 traverse the membrane as a helical segment; the sequence is GIGVFIANILTID. Topologically, residues 406 to 564 are cytoplasmic; that stretch reads RMSALQSKAV…PSSSSVQTTY (159 aa). Residues 432–542 form the STAS domain; sequence KRWLDEGNGR…DDRSEALKDA (111 aa).

The protein belongs to the SLC26A/SulP transporter (TC 2.A.53) family. As to quaternary structure, forms homodimers through the STAS cytoplasmic domain.

It is found in the cell inner membrane. In terms of biological role, low affinity, high-flux Na(+)-dependent bicarbonate transporter. Involved in carbone dioxide-concentrating mechanisms (CCMs) that accumulate CO(2) and improve photosynthetic carbon fixation. This chain is Bicarbonate transporter BicA, found in Synechocystis sp. (strain ATCC 27184 / PCC 6803 / Kazusa).